The sequence spans 293 residues: Pyridoxal 5'-phosphate synthase subunit PdxS (293 aa).

Aspartate 23 is a D-ribose 5-phosphate binding site. Lysine 80 functions as the Schiff-base intermediate with D-ribose 5-phosphate in the catalytic mechanism. Glycine 152 provides a ligand contact to D-ribose 5-phosphate. Arginine 164 serves as a coordination point for D-glyceraldehyde 3-phosphate. Residues glycine 213 and 234–235 (GS) each bind D-ribose 5-phosphate.

This sequence belongs to the PdxS/SNZ family. In terms of assembly, in the presence of PdxT, forms a dodecamer of heterodimers.

It carries out the reaction aldehydo-D-ribose 5-phosphate + D-glyceraldehyde 3-phosphate + L-glutamine = pyridoxal 5'-phosphate + L-glutamate + phosphate + 3 H2O + H(+). The protein operates within cofactor biosynthesis; pyridoxal 5'-phosphate biosynthesis. In terms of biological role, catalyzes the formation of pyridoxal 5'-phosphate from ribose 5-phosphate (RBP), glyceraldehyde 3-phosphate (G3P) and ammonia. The ammonia is provided by the PdxT subunit. Can also use ribulose 5-phosphate and dihydroxyacetone phosphate as substrates, resulting from enzyme-catalyzed isomerization of RBP and G3P, respectively. The sequence is that of Pyridoxal 5'-phosphate synthase subunit PdxS from Chloroflexus aurantiacus (strain ATCC 29366 / DSM 635 / J-10-fl).